Reading from the N-terminus, the 444-residue chain is Tubulin beta-6 chain (444 aa).

The GTP site is built by Gln-11, Glu-69, Ser-138, Gly-142, Thr-143, Gly-144, Asn-204, and Asn-226. Glu-69 contributes to the Mg(2+) binding site.

Belongs to the tubulin family. Dimer of alpha and beta chains. A typical microtubule is a hollow water-filled tube with an outer diameter of 25 nm and an inner diameter of 15 nM. Alpha-beta heterodimers associate head-to-tail to form protofilaments running lengthwise along the microtubule wall with the beta-tubulin subunit facing the microtubule plus end conferring a structural polarity. Microtubules usually have 13 protofilaments but different protofilament numbers can be found in some organisms and specialized cells. Mg(2+) serves as cofactor. In terms of tissue distribution, expressed in roots, leaf sheaths, anthers, and suspension cultured cells.

The protein resides in the cytoplasm. It is found in the cytoskeleton. In terms of biological role, tubulin is the major constituent of microtubules, a cylinder consisting of laterally associated linear protofilaments composed of alpha- and beta-tubulin heterodimers. Microtubules grow by the addition of GTP-tubulin dimers to the microtubule end, where a stabilizing cap forms. Below the cap, tubulin dimers are in GDP-bound state, owing to GTPase activity of alpha-tubulin. The chain is Tubulin beta-6 chain (TUBB6) from Oryza sativa subsp. japonica (Rice).